A 259-amino-acid polypeptide reads, in one-letter code: Phosphatidylserine decarboxylase proenzyme (259 aa).

The active-site Schiff-base intermediate with substrate; via pyruvic acid is S183. S183 is subject to Pyruvic acid (Ser); by autocatalysis.

The protein belongs to the phosphatidylserine decarboxylase family. PSD-A subfamily. In terms of assembly, heterodimer of a large membrane-associated beta subunit and a small pyruvoyl-containing alpha subunit. Pyruvate serves as cofactor. Post-translationally, is synthesized initially as an inactive proenzyme. Formation of the active enzyme involves a self-maturation process in which the active site pyruvoyl group is generated from an internal serine residue via an autocatalytic post-translational modification. Two non-identical subunits are generated from the proenzyme in this reaction, and the pyruvate is formed at the N-terminus of the alpha chain, which is derived from the carboxyl end of the proenzyme. The post-translation cleavage follows an unusual pathway, termed non-hydrolytic serinolysis, in which the side chain hydroxyl group of the serine supplies its oxygen atom to form the C-terminus of the beta chain, while the remainder of the serine residue undergoes an oxidative deamination to produce ammonia and the pyruvoyl prosthetic group on the alpha chain.

It localises to the cell membrane. It catalyses the reaction a 1,2-diacyl-sn-glycero-3-phospho-L-serine + H(+) = a 1,2-diacyl-sn-glycero-3-phosphoethanolamine + CO2. Its pathway is phospholipid metabolism; phosphatidylethanolamine biosynthesis; phosphatidylethanolamine from CDP-diacylglycerol: step 2/2. Its function is as follows. Catalyzes the formation of phosphatidylethanolamine (PtdEtn) from phosphatidylserine (PtdSer). The protein is Phosphatidylserine decarboxylase proenzyme of Neisseria gonorrhoeae (strain NCCP11945).